A 792-amino-acid polypeptide reads, in one-letter code: Alpha-1,6-mannosylglycoprotein 6-beta-N-acetylglucosaminyltransferase B (792 aa).

The Cytoplasmic portion of the chain corresponds to 1–24 (MITVNPDGKIMVRRCLVTLRPFRL). Residues 25–45 (FVLGIGFFTLCFLMTSLGGQF) form a helical; Signal-anchor for type II membrane protein membrane-spanning segment. The Lumenal portion of the chain corresponds to 46–792 (SARRLGDSPF…GQVALCQGCL (747 aa)). An N-linked (GlcNAc...) asparagine glycan is attached at asparagine 127. 4 cysteine pairs are disulfide-bonded: cysteine 157-cysteine 195, cysteine 168-cysteine 208, cysteine 184-cysteine 353, and cysteine 387-cysteine 644. Asparagine 675 carries an N-linked (GlcNAc...) asparagine glycan. 5 cysteine pairs are disulfide-bonded: cysteine 700/cysteine 775, cysteine 704/cysteine 777, cysteine 711/cysteine 764, cysteine 732/cysteine 753, and cysteine 788/cysteine 791.

It belongs to the glycosyltransferase 18 family. It depends on Mn(2+) as a cofactor. In terms of tissue distribution, present in brain (at protein level). Predominantly expressed in hippocampus, superficial layers of the brain cortex, striatum, nucleus accumbens, a subset of nuclei in the thalamus, inferior colliculus, brain stem and cerebellum.

It is found in the golgi apparatus membrane. It catalyses the reaction N(4)-{beta-D-GlcNAc-(1-&gt;2)-[beta-D-GlcNAc-(1-&gt;4)]-alpha-D-Man-(1-&gt;3)-[beta-D-GlcNAc-(1-&gt;2)-alpha-D-Man-(1-&gt;6)]-beta-D-Man-(1-&gt;4)-beta-D-GlcNAc-(1-&gt;4)-beta-D-GlcNAc}-L-asparaginyl-[protein] + UDP-N-acetyl-alpha-D-glucosamine = N(4)-{beta-D-GlcNAc-(1-&gt;2)-[beta-D-GlcNAc-(1-&gt;4)]-alpha-D-Man-(1-&gt;3)-[beta-D-GlcNAc-(1-&gt;2)-[beta-D-GlcNAc-(1-&gt;6)]-alpha-D-Man-(1-&gt;6)]-beta-D-Man-(1-&gt;4)-beta-D-GlcNAc-(1-&gt;4)-beta-D-GlcNAc}-L-asparaginyl-[protein] + UDP + H(+). The catalysed reaction is 3-O-[N-acetyl-beta-D-glucosaminyl-(1-&gt;2)-alpha-D-mannosyl]-L-seryl-[protein] + UDP-N-acetyl-alpha-D-glucosamine = O(3)-{N-acetyl-beta-D-glucosaminyl-(1-&gt;2)-[N-acetyl-beta-D-glucosaminyl-(1-&gt;6)]-alpha-D-mannosyl}-L-seryl-[protein] + UDP + H(+). It carries out the reaction 3-O-[N-acetyl-beta-D-glucosaminyl-(1-&gt;2)-alpha-D-mannosyl]-L-threonyl-[protein] + UDP-N-acetyl-alpha-D-glucosamine = O(3)-{N-acetyl-beta-D-glucosaminyl-(1-&gt;2)-[N-acetyl-beta-D-glucosaminyl-(1-&gt;6)]-alpha-D-mannosyl}-L-threonyl-[protein] + UDP + H(+). It participates in protein modification; protein glycosylation. Its function is as follows. Glycosyltransferase that acts on alpha-linked mannose of N-glycans and O-mannosyl glycans. Catalyzes the transfer of N-acetylglucosamine (GlcNAc) to the beta 1-6 linkage of the mannose residue of GlcNAc-beta1,2-Man-alpha on both the alpha1,3- and alpha1,6-linked mannose arms in the core structure of N-glycan. Also acts on the GlcNAc-beta1,2-Man-alpha1-Ser/Thr moiety, forming a 2,6-branched structure in brain O-mannosyl glycan. Plays an active role in modulating integrin and laminin-dependent adhesion and migration of neuronal cells via its activity in the O-mannosyl glycan pathway. The polypeptide is Alpha-1,6-mannosylglycoprotein 6-beta-N-acetylglucosaminyltransferase B (Mgat5b) (Mus musculus (Mouse)).